We begin with the raw amino-acid sequence, 60 residues long: Large ribosomal subunit protein bL32 (60 aa).

A disordered region spans residues 1–60; that stretch reads MAVQQNKKSRSARDMRRSHDALESNALSVEKSTGEVHLRHHVSPDGFYRGRKVVDKGSDE. Residues 11-22 show a composition bias toward basic and acidic residues; it reads SARDMRRSHDAL.

The protein belongs to the bacterial ribosomal protein bL32 family.

The sequence is that of Large ribosomal subunit protein bL32 from Pseudomonas aeruginosa (strain LESB58).